The following is a 705-amino-acid chain: Polyribonucleotide nucleotidyltransferase (705 aa).

Mg(2+)-binding residues include Asp-487 and Asp-493. The 60-residue stretch at 554 to 613 (PKILTMTINPDKIRDVIGPSGKQINKIIEETGVKIDIEQDGTIFISSTDESGNQKAKKII) folds into the KH domain. Residues 623 to 691 (GQLYLGKVKR…KQGRVNLSRK (69 aa)) enclose the S1 motif domain.

Belongs to the polyribonucleotide nucleotidyltransferase family. In terms of assembly, homodimer. Component of a possible RNA degradosome complex composed of rny, rnjA, rnjB, pnp, pfkA and eno (although rnjA and rnjB's presence is unclear). RNA helicase CshA may also be a member of this complex. Mg(2+) serves as cofactor.

The protein localises to the cytoplasm. The enzyme catalyses RNA(n+1) + phosphate = RNA(n) + a ribonucleoside 5'-diphosphate. Its function is as follows. Involved in mRNA degradation. Catalyzes the phosphorolysis of single-stranded polyribonucleotides processively in the 3'- to 5'-direction. Necessary for competence development in Bacillus subtilis. May be necessary for modification of the srfA transcript (stabilization or translation activation). Involved in processing precursor type I toxin-antitoxin RNAs antitoxin SR4 and SR5 RNAs to their mature forms. The protein is Polyribonucleotide nucleotidyltransferase of Bacillus subtilis (strain 168).